We begin with the raw amino-acid sequence, 637 residues long: ATP-dependent zinc metalloprotease FtsH (637 aa).

Residues 1 to 44 are Cytoplasmic-facing; the sequence is MAKHSQHSSPPRKLFDTLNDLWQRAKSEAGLSAEGPEGTRRRNN. A helical transmembrane segment spans residues 45 to 65; sequence LILYLLLVLSTLYLLNGYQTL. Residues 66-141 lie on the Periplasmic side of the membrane; the sequence is RNEEIPYSEF…TVRYGSNWFS (76 aa). The helical transmembrane segment at 142–162 threads the bilayer; it reads SLIFNWIVPIVLLTLFWTWMA. Over 163-637 the chain is Cytoplasmic; the sequence is RRMTGGRGFL…VKAVIREAAS (475 aa). 231–238 serves as a coordination point for ATP; the sequence is GPPGTGKT. His-454 lines the Zn(2+) pocket. Glu-455 is an active-site residue. Residues His-458 and Asp-531 each coordinate Zn(2+).

In the central section; belongs to the AAA ATPase family. This sequence in the C-terminal section; belongs to the peptidase M41 family. Homohexamer. The cofactor is Zn(2+).

The protein localises to the cell inner membrane. Functionally, acts as a processive, ATP-dependent zinc metallopeptidase for both cytoplasmic and membrane proteins. Plays a role in the quality control of integral membrane proteins. In Methylococcus capsulatus (strain ATCC 33009 / NCIMB 11132 / Bath), this protein is ATP-dependent zinc metalloprotease FtsH.